The following is a 288-amino-acid chain: Nucleotide-binding protein Gura_2968 (288 aa).

8–15 (GLSGSGKS) lines the ATP pocket. 59–62 (DIRG) is a binding site for GTP.

It belongs to the RapZ-like family.

Functionally, displays ATPase and GTPase activities. The polypeptide is Nucleotide-binding protein Gura_2968 (Geotalea uraniireducens (strain Rf4) (Geobacter uraniireducens)).